The primary structure comprises 184 residues: Translation initiation factor IF-3 (184 aa).

Belongs to the IF-3 family. As to quaternary structure, monomer.

The protein resides in the cytoplasm. Functionally, IF-3 binds to the 30S ribosomal subunit and shifts the equilibrium between 70S ribosomes and their 50S and 30S subunits in favor of the free subunits, thus enhancing the availability of 30S subunits on which protein synthesis initiation begins. The chain is Translation initiation factor IF-3 from Hamiltonella defensa subsp. Acyrthosiphon pisum (strain 5AT).